We begin with the raw amino-acid sequence, 334 residues long: Holliday junction branch migration complex subunit RuvB (334 aa).

Positions 4–184 (ADRLIQPQIQ…FGIPLRLEFY (181 aa)) are large ATPase domain (RuvB-L). ATP is bound by residues R24, G65, K68, T69, T70, 131–133 (EDY), R174, Y184, and R221. A Mg(2+)-binding site is contributed by T69. Residues 185-255 (NIKDLSTIVT…VAEHALDLLD (71 aa)) form a small ATPAse domain (RuvB-S) region. A head domain (RuvB-H) region spans residues 258 to 334 (SEGFDYMDRK…YQHFELIKPE (77 aa)). DNA is bound by residues R294, R313, and R318.

The protein belongs to the RuvB family. In terms of assembly, homohexamer. Forms an RuvA(8)-RuvB(12)-Holliday junction (HJ) complex. HJ DNA is sandwiched between 2 RuvA tetramers; dsDNA enters through RuvA and exits via RuvB. An RuvB hexamer assembles on each DNA strand where it exits the tetramer. Each RuvB hexamer is contacted by two RuvA subunits (via domain III) on 2 adjacent RuvB subunits; this complex drives branch migration. In the full resolvosome a probable DNA-RuvA(4)-RuvB(12)-RuvC(2) complex forms which resolves the HJ.

It localises to the cytoplasm. It carries out the reaction ATP + H2O = ADP + phosphate + H(+). Its function is as follows. The RuvA-RuvB-RuvC complex processes Holliday junction (HJ) DNA during genetic recombination and DNA repair, while the RuvA-RuvB complex plays an important role in the rescue of blocked DNA replication forks via replication fork reversal (RFR). RuvA specifically binds to HJ cruciform DNA, conferring on it an open structure. The RuvB hexamer acts as an ATP-dependent pump, pulling dsDNA into and through the RuvAB complex. RuvB forms 2 homohexamers on either side of HJ DNA bound by 1 or 2 RuvA tetramers; 4 subunits per hexamer contact DNA at a time. Coordinated motions by a converter formed by DNA-disengaged RuvB subunits stimulates ATP hydrolysis and nucleotide exchange. Immobilization of the converter enables RuvB to convert the ATP-contained energy into a lever motion, pulling 2 nucleotides of DNA out of the RuvA tetramer per ATP hydrolyzed, thus driving DNA branch migration. The RuvB motors rotate together with the DNA substrate, which together with the progressing nucleotide cycle form the mechanistic basis for DNA recombination by continuous HJ branch migration. Branch migration allows RuvC to scan DNA until it finds its consensus sequence, where it cleaves and resolves cruciform DNA. The chain is Holliday junction branch migration complex subunit RuvB from Shewanella baltica (strain OS223).